Consider the following 554-residue polypeptide: CTP synthase (554 aa).

An amidoligase domain region spans residues 1-265 (MTPLIFVTGG…DEIVVNQLKL (265 aa)). Ser-13 lines the CTP pocket. Ser-13 provides a ligand contact to UTP. 14-19 (SLGKGI) contributes to the ATP binding site. Asp-71 and Glu-139 together coordinate Mg(2+). CTP-binding positions include 146–148 (DIE), 186–191 (KTKPTQ), and Lys-222. UTP-binding positions include 186 to 191 (KTKPTQ) and Lys-222. A Glutamine amidotransferase type-1 domain is found at 292 to 545 (TIAVVGKYVD…IRAARERKAG (254 aa)). An L-glutamine-binding site is contributed by Gly-353. The active-site Nucleophile; for glutamine hydrolysis is the Cys-380. Residues 381-384 (YGMQ), Glu-404, and Arg-471 contribute to the L-glutamine site. Active-site residues include His-518 and Glu-520.

Belongs to the CTP synthase family. In terms of assembly, homotetramer.

The enzyme catalyses UTP + L-glutamine + ATP + H2O = CTP + L-glutamate + ADP + phosphate + 2 H(+). It carries out the reaction L-glutamine + H2O = L-glutamate + NH4(+). The catalysed reaction is UTP + NH4(+) + ATP = CTP + ADP + phosphate + 2 H(+). The protein operates within pyrimidine metabolism; CTP biosynthesis via de novo pathway; CTP from UDP: step 2/2. Allosterically activated by GTP, when glutamine is the substrate; GTP has no effect on the reaction when ammonia is the substrate. The allosteric effector GTP functions by stabilizing the protein conformation that binds the tetrahedral intermediate(s) formed during glutamine hydrolysis. Inhibited by the product CTP, via allosteric rather than competitive inhibition. Its function is as follows. Catalyzes the ATP-dependent amination of UTP to CTP with either L-glutamine or ammonia as the source of nitrogen. Regulates intracellular CTP levels through interactions with the four ribonucleotide triphosphates. In Stenotrophomonas maltophilia (strain K279a), this protein is CTP synthase.